The chain runs to 190 residues: Transcription antitermination protein NusB (190 aa).

The segment at 135-190 (APAPESVAEEADEESSDSAAAASEPTDEGDVSDSPDSSGASDEPAAPSAEIQPTVD) is disordered. The segment covering 141-150 (VAEEADEESS) has biased composition (acidic residues).

It belongs to the NusB family.

In terms of biological role, involved in transcription antitermination. Required for transcription of ribosomal RNA (rRNA) genes. Binds specifically to the boxA antiterminator sequence of the ribosomal RNA (rrn) operons. The sequence is that of Transcription antitermination protein NusB from Bifidobacterium longum (strain DJO10A).